A 483-amino-acid chain; its full sequence is Putative (R)-citramalate synthase CimA (483 aa).

The 245-residue stretch at 1–245 (MRDGEQTPGV…DTGIKHEQIY (245 aa)) folds into the Pyruvate carboxyltransferase domain.

The protein belongs to the alpha-IPM synthase/homocitrate synthase family. Homodimer.

It carries out the reaction pyruvate + acetyl-CoA + H2O = (3R)-citramalate + CoA + H(+). The protein operates within amino-acid biosynthesis; L-isoleucine biosynthesis; 2-oxobutanoate from pyruvate: step 1/3. Its function is as follows. Catalyzes the condensation of pyruvate and acetyl-coenzyme A to form (R)-citramalate. This chain is Putative (R)-citramalate synthase CimA, found in Methanosarcina mazei (strain ATCC BAA-159 / DSM 3647 / Goe1 / Go1 / JCM 11833 / OCM 88) (Methanosarcina frisia).